Here is a 328-residue protein sequence, read N- to C-terminus: Neuronal membrane glycoprotein M6-b (328 aa).

Residues 1-22 (MKPAMETAAEENTEQSQERKVN) are disordered. Residues 71–91 (GGVPYASLVATILCFSGVALF) form a helical membrane-spanning segment. The N-linked (GlcNAc...) asparagine glycan is linked to N113. 2 helical membrane-spanning segments follow: residues 130–150 (VIYGIASFFFLYGIILLAEGF) and 176–196 (FVFLTYVLGVAWLGVFGFSAV). An N-linked (GlcNAc...) asparagine glycan is attached at N217. Residues 265–285 (FIVACAGAGATVIALIHFLMI) form a helical membrane-spanning segment. S318, S320, and S326 each carry phosphoserine.

The protein belongs to the myelin proteolipid protein family. In terms of assembly, interacts with SERT. In terms of tissue distribution, widely expressed. In the brain, expressed in neurons and oligodendrocytes.

It localises to the membrane. The protein localises to the cell membrane. In terms of biological role, may be involved in neural development. Involved in regulation of osteoblast function and bone formation. Involved in matrix vesicle release by osteoblasts; this function seems to involve maintenance of the actin cytoskeleton. May be involved in cellular trafficking of SERT and thereby in regulation of serotonin uptake. This is Neuronal membrane glycoprotein M6-b (Gpm6b) from Mus musculus (Mouse).